The primary structure comprises 160 residues: Putative pre-16S rRNA nuclease (160 aa).

Belongs to the YqgF nuclease family.

The protein resides in the cytoplasm. Its function is as follows. Could be a nuclease involved in processing of the 5'-end of pre-16S rRNA. This chain is Putative pre-16S rRNA nuclease, found in Cutibacterium acnes (strain DSM 16379 / KPA171202) (Propionibacterium acnes).